The following is a 160-amino-acid chain: Nucleotide-binding protein VC_1508 (160 aa).

This sequence belongs to the YajQ family.

Functionally, nucleotide-binding protein. The protein is Nucleotide-binding protein VC_1508 of Vibrio cholerae serotype O1 (strain ATCC 39315 / El Tor Inaba N16961).